The sequence spans 874 residues: Alanine--tRNA ligase (874 aa).

Residues His562, His566, Cys664, and His668 each coordinate Zn(2+).

This sequence belongs to the class-II aminoacyl-tRNA synthetase family. Requires Zn(2+) as cofactor.

Its subcellular location is the cytoplasm. It catalyses the reaction tRNA(Ala) + L-alanine + ATP = L-alanyl-tRNA(Ala) + AMP + diphosphate. Functionally, catalyzes the attachment of alanine to tRNA(Ala) in a two-step reaction: alanine is first activated by ATP to form Ala-AMP and then transferred to the acceptor end of tRNA(Ala). Also edits incorrectly charged Ser-tRNA(Ala) and Gly-tRNA(Ala) via its editing domain. The chain is Alanine--tRNA ligase from Shewanella sp. (strain MR-7).